The sequence spans 400 residues: Enoyl-[acyl-carrier-protein] reductase [NADH] (400 aa).

Residues 48–53, 74–75, 111–112, and 139–140 each bind NAD(+); these read GASTGY, FE, DA, and LA. Substrate is bound at residue Y225. The Proton donor role is filled by Y235. Residues K244 and 273–275 each bind NAD(+); that span reads VVT.

This sequence belongs to the TER reductase family. In terms of assembly, monomer.

It carries out the reaction a 2,3-saturated acyl-[ACP] + NAD(+) = a (2E)-enoyl-[ACP] + NADH + H(+). It functions in the pathway lipid metabolism; fatty acid biosynthesis. Its function is as follows. Involved in the final reduction of the elongation cycle of fatty acid synthesis (FAS II). Catalyzes the reduction of a carbon-carbon double bond in an enoyl moiety that is covalently linked to an acyl carrier protein (ACP). The polypeptide is Enoyl-[acyl-carrier-protein] reductase [NADH] (Burkholderia cenocepacia (strain HI2424)).